A 240-amino-acid chain; its full sequence is Peptidyl-tRNA hydrolase (240 aa).

Tyr14 is a binding site for tRNA. Catalysis depends on His19, which acts as the Proton acceptor. Positions 64, 66, and 112 each coordinate tRNA. The disordered stretch occupies residues 196–227 (EKPAQKQQPKQQSHIRQARSQQAPAKLPETGP). Residues 209 to 218 (HIRQARSQQA) are compositionally biased toward polar residues.

This sequence belongs to the PTH family. In terms of assembly, monomer.

It localises to the cytoplasm. It catalyses the reaction an N-acyl-L-alpha-aminoacyl-tRNA + H2O = an N-acyl-L-amino acid + a tRNA + H(+). Its function is as follows. Hydrolyzes ribosome-free peptidyl-tRNAs (with 1 or more amino acids incorporated), which drop off the ribosome during protein synthesis, or as a result of ribosome stalling. In terms of biological role, catalyzes the release of premature peptidyl moieties from peptidyl-tRNA molecules trapped in stalled 50S ribosomal subunits, and thus maintains levels of free tRNAs and 50S ribosomes. The sequence is that of Peptidyl-tRNA hydrolase from Mesorhizobium japonicum (strain LMG 29417 / CECT 9101 / MAFF 303099) (Mesorhizobium loti (strain MAFF 303099)).